Here is a 222-residue protein sequence, read N- to C-terminus: Superoxide dismutase [Mn], mitochondrial (222 aa).

Residues 1 to 24 constitute a mitochondrion transit peptide; sequence MLSRAVCGTGRQLAPALGYLGSRQ. Histidine 50 serves as a coordination point for Mn(2+). Position 58 is a 3'-nitrotyrosine (tyrosine 58). N6-acetyllysine; alternate is present on residues lysine 68 and lysine 75. N6-succinyllysine; alternate occurs at positions 68 and 75. Histidine 98 provides a ligand contact to Mn(2+). Lysine 114 bears the N6-acetyllysine mark. Residues lysine 122 and lysine 130 each carry the N6-acetyllysine; alternate modification. N6-succinyllysine; alternate occurs at positions 122 and 130. Positions 183 and 187 each coordinate Mn(2+). Lysine 202 bears the N6-acetyllysine mark.

Belongs to the iron/manganese superoxide dismutase family. In terms of assembly, homotetramer. Requires Mn(2+) as cofactor. In terms of processing, nitrated under oxidative stress. Nitration coupled with oxidation inhibits the catalytic activity. Acetylation at Lys-122 decreases enzymatic activity. Deacetylated by SIRT3 upon exposure to ionizing radiations or after long fasting. Post-translationally, polyubiquitinated; leading to proteasomal degradation. Deubiquitinated by USP36 which increases protein stability.

It is found in the mitochondrion matrix. The enzyme catalyses 2 superoxide + 2 H(+) = H2O2 + O2. Destroys superoxide anion radicals which are normally produced within the cells and which are toxic to biological systems. The protein is Superoxide dismutase [Mn], mitochondrial (SOD2) of Macaca fascicularis (Crab-eating macaque).